The chain runs to 680 residues: Calcium-binding and coiled-coil domain-containing protein 1 (680 aa).

Positions 1-30 are p300 KIX-binding; sequence MEESSLSRAPSRGGVNFLNVARTYIPNTKV. The tract at residues 1-190 is N-terminal AD (CTNNB1 binding site); the sequence is MEESSLSRAP…VQELEKALAA (190 aa). Residue S4 is modified to Phosphoserine. The tract at residues 45-125 is interaction with GATA1; it reads SDWIGIFKVE…FQFREPRPMD (81 aa). Coiled coils occupy residues 145–205, 232–339, and 417–514; these read KATV…YKGL, ELEE…AELE, and QSVE…ADEK. Positions 501-680 are C-terminal AD (CTNNB1 binding site); interaction with CCAR1; the sequence is RKLEARLEKV…HTYTHTHTHA (180 aa). Residues 511-606 are disordered; it reads ADEKWSEDPA…DSEAEDEKSV (96 aa). The segment at 654–679 adopts a UBZ1-type zinc-finger fold; sequence WKECPICKERFPVHTQTHTYTHTHTH. Residues C657, C660, H675, and H679 each contribute to the Zn(2+) site.

This sequence belongs to the CALCOCO family. As to quaternary structure, part of a calphoglin complex consisting of CALCOCO1, PPA1 and PGM. Interacts with the bHLH-PAS domains of GRIP1, AHR and ARNT. Interacts with CTNNB1 via both its N- and C-terminal regions. Interacts with EP300. Interacts with CCAR1 (via N-terminus) and GATA1.

Its subcellular location is the cytoplasm. The protein localises to the nucleus. Functions as a coactivator for aryl hydrocarbon and nuclear receptors (NR). Recruited to promoters through its contact with the N-terminal basic helix-loop-helix-Per-Arnt-Sim (PAS) domain of transcription factors or coactivators, such as NCOA2. During ER-activation acts synergistically in combination with other NCOA2-binding proteins, such as EP300, CREBBP and CARM1. Involved in the transcriptional activation of target genes in the Wnt/CTNNB1 pathway. Functions as a secondary coactivator in LEF1-mediated transcriptional activation via its interaction with CTNNB1. Coactivator function for nuclear receptors and LEF1/CTNNB1 involves differential utilization of two different activation regions. In association with CCAR1 enhances GATA1- and MED1-mediated transcriptional activation from the gamma-globin promoter during erythroid differentiation of K562 erythroleukemia cells. Functionally, seems to enhance inorganic pyrophosphatase thus activating phosphogluomutase (PMG). Probably functions as a component of the calphoglin complex, which is involved in linking cellular metabolism (phosphate and glucose metabolism) with other core functions including protein synthesis and degradation, calcium signaling and cell growth. This chain is Calcium-binding and coiled-coil domain-containing protein 1 (CALCOCO1), found in Bos taurus (Bovine).